The sequence spans 374 residues: Zinc finger CCCH domain-containing protein 15 homolog (374 aa).

2 C3H1-type zinc fingers span residues 89–116 (DPKS…HDLA) and 167–197 (YFLE…HCLP).

The protein belongs to the ZC3H15/TMA46 family.

This Caenorhabditis briggsae protein is Zinc finger CCCH domain-containing protein 15 homolog.